The sequence spans 147 residues: Myoglobin (147 aa).

The Globin domain maps to 2–141; sequence ADFDAVLKCW…VIADLEANYK (140 aa). Position 60 (H60) interacts with nitrite. H60 contributes to the O2 binding site. H89 contributes to the heme b binding site.

This sequence belongs to the globin family. As to quaternary structure, monomeric.

The protein resides in the cytoplasm. It localises to the sarcoplasm. The enzyme catalyses Fe(III)-heme b-[protein] + nitric oxide + H2O = Fe(II)-heme b-[protein] + nitrite + 2 H(+). The catalysed reaction is H2O2 + AH2 = A + 2 H2O. Functionally, monomeric heme protein which primary function is to store oxygen and facilitate its diffusion within muscle tissues. Reversibly binds oxygen through a pentacoordinated heme iron and enables its timely and efficient release as needed during periods of heightened demand. Depending on the oxidative conditions of tissues and cells, and in addition to its ability to bind oxygen, it also has a nitrite reductase activity whereby it regulates the production of bioactive nitric oxide. Under stress conditions, like hypoxia and anoxia, it also protects cells against reactive oxygen species thanks to its pseudoperoxidase activity. The protein is Myoglobin (mb) of Auxis rochei (Bullet tuna).